A 341-amino-acid chain; its full sequence is tRNA N6-adenosine threonylcarbamoyltransferase (341 aa).

Fe cation-binding residues include histidine 111 and histidine 115. Substrate is bound by residues 134 to 138, aspartate 167, glycine 180, and asparagine 276; that span reads LVSGG. Aspartate 304 contributes to the Fe cation binding site.

The protein belongs to the KAE1 / TsaD family. Requires Fe(2+) as cofactor.

Its subcellular location is the cytoplasm. It catalyses the reaction L-threonylcarbamoyladenylate + adenosine(37) in tRNA = N(6)-L-threonylcarbamoyladenosine(37) in tRNA + AMP + H(+). In terms of biological role, required for the formation of a threonylcarbamoyl group on adenosine at position 37 (t(6)A37) in tRNAs that read codons beginning with adenine. Is involved in the transfer of the threonylcarbamoyl moiety of threonylcarbamoyl-AMP (TC-AMP) to the N6 group of A37, together with TsaE and TsaB. TsaD likely plays a direct catalytic role in this reaction. This is tRNA N6-adenosine threonylcarbamoyltransferase from Pseudomonas fluorescens (strain ATCC BAA-477 / NRRL B-23932 / Pf-5).